Reading from the N-terminus, the 744-residue chain is Merozoite surface protein 9 (744 aa).

An N-terminal signal peptide occupies residues 1–23 (MMNMKIVLFSLLLFVIRWNIISC). The tract at residues 77 to 235 (KELLKEKQYT…VNDEDDVNDE (159 aa)) is interaction with MSP1 and host SLC4A1/Band 3. Disordered regions lie at residues 202–282 (KSQG…ATAY), 459–487 (DNQA…PTED), 512–540 (NNTP…ENFD), and 666–744 (VDAL…EESK). A compositionally biased stretch (polar residues) spans 211–224 (SQNQNENNDNQKYQ). Repeat copies occupy residues 226-231 (VNDEDD), 232-237 (VNDEED), 238-243 (TNDDED), 244-249 (TNDEED), 250-255 (TNDDED), 256-261 (TNDDED), 262-267 (TNDEED), and 268-273 (TNDEED). The segment at 226–273 (VNDEDDVNDEEDTNDDEDTNDEEDTNDDEDTNDDEDTNDEEDTNDEED) is 8 X 6 AA tandem repeats of [VT]-N-D-[ED]-[ED]-D. Residues 226 to 274 (VNDEDDVNDEEDTNDDEDTNDEEDTNDDEDTNDDEDTNDEEDTNDEEDH) show a composition bias toward acidic residues. An interaction with MSP1 and host SLC4A1/Band 3 region spans residues 364–528 (LKDNLINYEF…PPTQSKKKNK (165 aa)). A compositionally biased stretch (basic and acidic residues) spans 459–473 (DNQAVDTKSMEEPKV). Positions 512-521 (NNTPNVVPPT) are enriched in low complexity. A coiled-coil region spans residues 644-734 (NQETEEEMEK…QEEEEEEEIV (91 aa)). 2 stretches are compositionally biased toward basic and acidic residues: residues 672-698 (KNKE…KEKE) and 706-719 (EKEK…KEEK). The segment covering 720-734 (EKEEEQEEEEEEEIV) has biased composition (acidic residues).

Belongs to the plasmodium ABRA family. In terms of assembly, forms a complex composed of MSP1, MSP6, MSP7, MSP9 and MSP3; within the complex, MSP6 and MSP9 mediate the binding to the host erythrocyte. Interacts with MSP1 subunits p19 and p42; the interaction is direct. Interacts with host SLC4A1/Band 3 protein (via the 5ABC region). MSP1 subunits p19 or p42, and MSP9 form a co-ligand complex that interacts with host SLC4A1/Band 3 protein. Post-translationally, not glycosylated.

The protein resides in the cell membrane. The protein localises to the parasitophorous vacuole lumen. It is found in the secreted. During the asexual blood stage, involved in the sialic acid-independent (SAID) merozoite invasion of host erythrocytes by binding to host SLC4A1/Band 3 protein on the surface of the host erythrocyte. This is Merozoite surface protein 9 from Plasmodium falciparum (isolate 7G8).